The following is a 137-amino-acid chain: MASNPHRSGAGGSLYGGAAPYRSREGLSTRNAAGSEEIQLRIDPMHSDLDDEITGLHGQVRQLKNIAQEIGSEAKFQRDFLDELQMTLIRAQAGVKNNIRKLNMSIIRSGNNHIMHVVLFALLVFFVLYIWSKMFKR.

The Cytoplasmic segment spans residues Met1–His113. Residues Asp43–Ser105 form the t-SNARE coiled-coil homology domain. The helical; Anchor for type IV membrane protein transmembrane segment at Ile114–Met134 threads the bilayer. The Vesicular segment spans residues Phe135 to Arg137.

It belongs to the BET1 family.

The protein resides in the golgi apparatus membrane. The protein localises to the endoplasmic reticulum membrane. Required for vesicular transport from the ER to the Golgi complex. Functions as a SNARE associated with ER-derived vesicles. This Arabidopsis thaliana (Mouse-ear cress) protein is Bet1-like protein At4g14600.